The following is a 434-amino-acid chain: Nicotinate phosphoribosyltransferase (434 aa).

Histidine 242 is subject to Phosphohistidine; by autocatalysis.

It belongs to the NAPRTase family. In terms of processing, transiently phosphorylated on a His residue during the reaction cycle. Phosphorylation strongly increases the affinity for substrates and increases the rate of nicotinate D-ribonucleotide production. Dephosphorylation regenerates the low-affinity form of the enzyme, leading to product release.

The catalysed reaction is nicotinate + 5-phospho-alpha-D-ribose 1-diphosphate + ATP + H2O = nicotinate beta-D-ribonucleotide + ADP + phosphate + diphosphate. It functions in the pathway cofactor biosynthesis; NAD(+) biosynthesis; nicotinate D-ribonucleotide from nicotinate: step 1/1. Its function is as follows. Catalyzes the synthesis of beta-nicotinate D-ribonucleotide from nicotinate and 5-phospho-D-ribose 1-phosphate at the expense of ATP. This Rhizobium leguminosarum bv. trifolii (strain WSM2304) protein is Nicotinate phosphoribosyltransferase.